Consider the following 31-residue polypeptide: Small protein MgtS (31 aa).

Topologically, residues 1–4 are periplasmic; sequence MLGN. The helical transmembrane segment at 5–25 threads the bilayer; sequence MNVFMAVLGIILFSGFLAAYF. Residues 26–31 lie on the Cytoplasmic side of the membrane; that stretch reads SHKWDD.

As to quaternary structure, interacts with MgtA.

The protein resides in the cell inner membrane. In terms of biological role, modulates intracellular Mg(2+) levels to maintain cellular integrity upon Mg(2+) limitation. Acts by binding and stabilizing the Mg(2+) transporter MgtA, thereby leading to increased intracellular level of Mg(2+). May inhibit FtsH proteolysis of MgtA. In Escherichia coli (strain K12), this protein is Small protein MgtS.